The primary structure comprises 738 residues: 1,4-alpha-glucan branching enzyme GlgB (738 aa).

D399 (nucleophile) is an active-site residue. The active-site Proton donor is the E452.

The protein belongs to the glycosyl hydrolase 13 family. GlgB subfamily. Monomer.

The enzyme catalyses Transfers a segment of a (1-&gt;4)-alpha-D-glucan chain to a primary hydroxy group in a similar glucan chain.. Its pathway is glycan biosynthesis; glycogen biosynthesis. Its function is as follows. Catalyzes the formation of the alpha-1,6-glucosidic linkages in glycogen by scission of a 1,4-alpha-linked oligosaccharide from growing alpha-1,4-glucan chains and the subsequent attachment of the oligosaccharide to the alpha-1,6 position. In Chlamydia trachomatis serovar D (strain ATCC VR-885 / DSM 19411 / UW-3/Cx), this protein is 1,4-alpha-glucan branching enzyme GlgB.